The following is a 474-amino-acid chain: Proline--tRNA ligase (474 aa).

The protein belongs to the class-II aminoacyl-tRNA synthetase family. ProS type 3 subfamily. As to quaternary structure, homodimer.

It is found in the cytoplasm. It carries out the reaction tRNA(Pro) + L-proline + ATP = L-prolyl-tRNA(Pro) + AMP + diphosphate. Functionally, catalyzes the attachment of proline to tRNA(Pro) in a two-step reaction: proline is first activated by ATP to form Pro-AMP and then transferred to the acceptor end of tRNA(Pro). The sequence is that of Proline--tRNA ligase from Mycoplasma capricolum subsp. capricolum (strain California kid / ATCC 27343 / NCTC 10154).